The chain runs to 137 residues: Large ribosomal subunit protein uL16 (137 aa).

It belongs to the universal ribosomal protein uL16 family. Part of the 50S ribosomal subunit.

Functionally, binds 23S rRNA and is also seen to make contacts with the A and possibly P site tRNAs. This is Large ribosomal subunit protein uL16 from Bradyrhizobium sp. (strain ORS 278).